Here is a 616-residue protein sequence, read N- to C-terminus: UvrABC system protein C (616 aa).

Residues glutamate 12 to isoleucine 91 enclose the GIY-YIG domain. Positions serine 202 to methionine 237 constitute a UVR domain.

The protein belongs to the UvrC family. As to quaternary structure, interacts with UvrB in an incision complex.

It is found in the cytoplasm. Functionally, the UvrABC repair system catalyzes the recognition and processing of DNA lesions. UvrC both incises the 5' and 3' sides of the lesion. The N-terminal half is responsible for the 3' incision and the C-terminal half is responsible for the 5' incision. In Gemmatimonas aurantiaca (strain DSM 14586 / JCM 11422 / NBRC 100505 / T-27), this protein is UvrABC system protein C.